Here is a 353-residue protein sequence, read N- to C-terminus: Guanine nucleotide-binding protein G(q) subunit alpha (353 aa).

Residues Cys3 and Cys4 are each lipidated (S-palmitoyl cysteine). In terms of domain architecture, G-alpha spans 32 to 353 (RELKLLLLGT…QLNLKEYNLV (322 aa)). The interval 35–48 (KLLLLGTGESGKST) is G1 motif. GTP-binding positions include 40–47 (GTGESGKS), 174–180 (LRVRVPT), 199–203 (DVGGQ), 268–271 (NKKD), and Ala325. Mg(2+) is bound by residues Ser47 and Thr180. The segment at 172–180 (DILRVRVPT) is G2 motif. The interval 195–204 (FRMVDVGGQR) is G3 motif. The G4 motif stretch occupies residues 264–271 (ILFLNKKD). The segment at 323–328 (TCATDT) is G5 motif.

Belongs to the G-alpha family. G(q) subfamily. As to quaternary structure, g proteins are composed of 3 units; alpha, beta and gamma. The alpha chain contains the guanine nucleotide binding site.

In terms of biological role, guanine nucleotide-binding proteins (G proteins) are involved as modulators or transducers in various transmembrane signaling systems. The chain is Guanine nucleotide-binding protein G(q) subunit alpha from Lymnaea stagnalis (Great pond snail).